A 396-amino-acid polypeptide reads, in one-letter code: Protein-export membrane protein SecD (396 aa).

6 helical membrane-spanning segments follow: residues 12 to 32 (ILIL…KGLD), 243 to 263 (LKGT…IVSI), 272 to 292 (IPIL…ASLI), 298 to 318 (LPSI…QIVI), 338 to 358 (FFII…LFVL), and 360 to 380 (VGML…GIFI).

Belongs to the SecD/SecF family. SecD subfamily. Part of the protein translocation apparatus. Forms a complex with SecF.

It localises to the cell membrane. In terms of biological role, involved in protein export. In Methanocaldococcus jannaschii (strain ATCC 43067 / DSM 2661 / JAL-1 / JCM 10045 / NBRC 100440) (Methanococcus jannaschii), this protein is Protein-export membrane protein SecD.